Consider the following 430-residue polypeptide: Aspartate aminotransferase, mitochondrial (430 aa).

A mitochondrion-targeting transit peptide spans 1–29; that stretch reads MALLHSGRVLSGVASAFHPGLAAAASARA. Thr48 carries the post-translational modification Phosphothreonine. An N6-acetyllysine modification is found at Lys59. Gly65 lines the substrate pocket. Lys73 carries the N6-acetyllysine; alternate modification. N6-succinyllysine; alternate is present on Lys73. Position 82 is an N6-acetyllysine (Lys82). Lys90 is modified (N6-acetyllysine; alternate). Lys90 is modified (N6-succinyllysine; alternate). Position 96 is a 3'-nitrotyrosine; alternate (Tyr96). Tyr96 bears the Phosphotyrosine; alternate mark. 3 positions are modified to N6-acetyllysine; alternate: Lys107, Lys122, and Lys159. 3 positions are modified to N6-succinyllysine; alternate: Lys107, Lys122, and Lys159. A substrate-binding site is contributed by Trp162. An N6-acetyllysine; alternate modification is found at Lys185. Lys185 carries the N6-succinyllysine; alternate modification. Asn215 is a substrate binding site. N6-succinyllysine is present on Lys227. N6-acetyllysine is present on Lys234. 2 positions are modified to N6-acetyllysine; alternate: Lys279 and Lys296. Lys279 carries the N6-(pyridoxal phosphate)lysine; alternate modification. N6-succinyllysine; alternate is present on Lys296. Lys302 carries the N6-acetyllysine modification. Lys309 is subject to N6-acetyllysine; alternate. At Lys309 the chain carries N6-succinyllysine; alternate. Asymmetric dimethylarginine is present on Arg313. N6-acetyllysine is present on Lys345. N6-acetyllysine; alternate is present on Lys363. An N6-succinyllysine; alternate modification is found at Lys363. N6-acetyllysine is present on residues Lys364 and Lys387. Residues Lys396 and Lys404 each carry the N6-acetyllysine; alternate modification. N6-succinyllysine; alternate occurs at positions 396 and 404. Arg407 is a substrate binding site.

This sequence belongs to the class-I pyridoxal-phosphate-dependent aminotransferase family. Homodimer. Requires pyridoxal 5'-phosphate as cofactor.

The protein localises to the mitochondrion matrix. The protein resides in the cell membrane. The enzyme catalyses L-aspartate + 2-oxoglutarate = oxaloacetate + L-glutamate. The catalysed reaction is L-kynurenine + 2-oxoglutarate = kynurenate + L-glutamate + H2O. Functionally, catalyzes the irreversible transamination of the L-tryptophan metabolite L-kynurenine to form kynurenic acid (KA). As a member of the malate-aspartate shuttle, it has a key role in the intracellular NAD(H) redox balance. Is important for metabolite exchange between mitochondria and cytosol, and for amino acid metabolism. Facilitates cellular uptake of long-chain free fatty acids. The sequence is that of Aspartate aminotransferase, mitochondrial (GOT2) from Sus scrofa (Pig).